A 262-amino-acid chain; its full sequence is Phosphate import ATP-binding protein PstB (262 aa).

The 242-residue stretch at 16–257 (MEARHLSVRY…PSEQRTEDYV (242 aa)) folds into the ABC transporter domain. Residue 48 to 55 (GPSGCGKS) participates in ATP binding.

Belongs to the ABC transporter superfamily. Phosphate importer (TC 3.A.1.7) family. The complex is composed of two ATP-binding proteins (PstB), two transmembrane proteins (PstC and PstA) and a solute-binding protein (PstS).

Its subcellular location is the cell inner membrane. It catalyses the reaction phosphate(out) + ATP + H2O = ADP + 2 phosphate(in) + H(+). Part of the ABC transporter complex PstSACB involved in phosphate import. Responsible for energy coupling to the transport system. The polypeptide is Phosphate import ATP-binding protein PstB (Anaeromyxobacter dehalogenans (strain 2CP-C)).